The following is a 253-amino-acid chain: ATP synthase subunit a (253 aa).

A run of 6 helical transmembrane segments spans residues 30 to 50 (FTNA…VLLA), 88 to 108 (FFPF…IGLV), 118 to 138 (IAVT…YGLI), 144 to 164 (FLGI…MIMI), 184 to 204 (MLAG…LLGA), and 211 to 231 (VAPL…LVAF).

This sequence belongs to the ATPase A chain family. As to quaternary structure, F-type ATPases have 2 components, CF(1) - the catalytic core - and CF(0) - the membrane proton channel. CF(1) has five subunits: alpha(3), beta(3), gamma(1), delta(1), epsilon(1). CF(0) has three main subunits: a(1), b(2) and c(9-12). The alpha and beta chains form an alternating ring which encloses part of the gamma chain. CF(1) is attached to CF(0) by a central stalk formed by the gamma and epsilon chains, while a peripheral stalk is formed by the delta and b chains.

It localises to the cell inner membrane. Functionally, key component of the proton channel; it plays a direct role in the translocation of protons across the membrane. This chain is ATP synthase subunit a, found in Beijerinckia indica subsp. indica (strain ATCC 9039 / DSM 1715 / NCIMB 8712).